The primary structure comprises 216 residues: Redox-sensing transcriptional repressor Rex (216 aa).

A DNA-binding region (H-T-H motif) is located at residues 20–59 (QYYRLFKSLVEENVTRTNSQLISEKIGVDAATIRRDFSLF). 94 to 99 (GVGNLG) is a binding site for NAD(+).

It belongs to the transcriptional regulatory Rex family. Homodimer.

The protein resides in the cytoplasm. Its function is as follows. Modulates transcription in response to changes in cellular NADH/NAD(+) redox state. The chain is Redox-sensing transcriptional repressor Rex from Lactococcus lactis subsp. cremoris (Streptococcus cremoris).